The sequence spans 293 residues: 33 kDa chaperonin (293 aa).

2 disulfides stabilise this stretch: Cys238–Cys240 and Cys271–Cys274.

This sequence belongs to the HSP33 family. Post-translationally, under oxidizing conditions two disulfide bonds are formed involving the reactive cysteines. Under reducing conditions zinc is bound to the reactive cysteines and the protein is inactive.

The protein resides in the cytoplasm. Redox regulated molecular chaperone. Protects both thermally unfolding and oxidatively damaged proteins from irreversible aggregation. Plays an important role in the bacterial defense system toward oxidative stress. This chain is 33 kDa chaperonin, found in Staphylococcus aureus (strain USA300).